We begin with the raw amino-acid sequence, 257 residues long: 3-deoxy-manno-octulosonate cytidylyltransferase (257 aa).

Belongs to the KdsB family.

The protein localises to the cytoplasm. The catalysed reaction is 3-deoxy-alpha-D-manno-oct-2-ulosonate + CTP = CMP-3-deoxy-beta-D-manno-octulosonate + diphosphate. It participates in nucleotide-sugar biosynthesis; CMP-3-deoxy-D-manno-octulosonate biosynthesis; CMP-3-deoxy-D-manno-octulosonate from 3-deoxy-D-manno-octulosonate and CTP: step 1/1. The protein operates within bacterial outer membrane biogenesis; lipopolysaccharide biosynthesis. Activates KDO (a required 8-carbon sugar) for incorporation into bacterial lipopolysaccharide in Gram-negative bacteria. The sequence is that of 3-deoxy-manno-octulosonate cytidylyltransferase from Stenotrophomonas maltophilia (strain R551-3).